The chain runs to 1033 residues: SIT4-associating protein SAP190 (1033 aa).

Disordered stretches follow at residues 32–82 (DQDD…TTES), 147–213 (PEII…QVET), 768–813 (FGND…HDSG), and 828–1033 (ENEE…KEAF). Over residues 158–170 (ILIERDRKDKKED) the composition is skewed to basic and acidic residues. Positions 171–182 (AEEGGDSEETTN) are enriched in acidic residues. The segment covering 183 to 195 (DSDHDSGDERSVD) has biased composition (basic and acidic residues). A Phosphoserine modification is found at Ser774. Composition is skewed to acidic residues over residues 784–793 (SEDIIGDTEG) and 828–838 (ENEEDYAEYSD). A phosphoserine mark is found at Ser857, Ser862, and Ser892. Residues 858–879 (DDGKSKSAESEFTDKISEHRDG) are compositionally biased toward basic and acidic residues. Residues 909–924 (SRSQPSDPKLQDQNIF) show a composition bias toward polar residues. Acidic residues predominate over residues 932 to 944 (GVGDDDDYMDPND). Thr990 is subject to Phosphothreonine. Phosphoserine is present on Ser991. The segment covering 1000-1018 (ISSDEEDSEDEDEENDMGN) has biased composition (acidic residues).

This sequence belongs to the SAPS family. Associates with the SIT4 protein phosphatase catalytic subunit in a cell-cycle-dependent manner. Hyperphosphorylated in the absence of SIT4.

Its subcellular location is the cytoplasm. Positive regulator of protein phosphatase SIT4. Involved in the general amino acid control (GAAC) response regulated by TOR. Involved in the dephosphorylation of the elongator complex subunit IKI3. In Saccharomyces cerevisiae (strain Lalvin EC1118 / Prise de mousse) (Baker's yeast), this protein is SIT4-associating protein SAP190 (SAP190).